A 209-amino-acid polypeptide reads, in one-letter code: MRPRMWLLLSAQLAALHGNSVLQQTPAYIMVQTNQMVMLSCKAISSSTTRIYWLRQLHAPSSNSHHEILAFWDSSKGTIHSEGVEQKKITVFRDGSLFFLNLTRVKLEDSGTYFCMVIGSPTLIFGTGTQLSVVDILPTTAQTTKKSTPKKTVCRLPRPETRKGPLCSPITLSLLVAGILVLLVSLGVAIHLYCRQRRARLRFMKQFYK.

The signal sequence occupies residues 1-21 (MRPRMWLLLSAQLAALHGNSV). The Ig-like V-type domain maps to 22–131 (LQQTPAYIMV…TLIFGTGTQL (110 aa)). Residues 22-169 (LQQTPAYIMV…ETRKGPLCSP (148 aa)) lie on the Extracellular side of the membrane. The cysteines at positions 41 and 115 are disulfide-linked. Asn101 is a glycosylation site (N-linked (GlcNAc...) asparagine). Residues 170–190 (ITLSLLVAGILVLLVSLGVAI) form a helical membrane-spanning segment. At 191–209 (HLYCRQRRARLRFMKQFYK) the chain is on the cytoplasmic side.

Forms disulfide-linked heterodimers with CD8A at the cell surface. Interacts with CD3D; this interaction couples TCR-CD3 with CD8. Interacts with LCK. Phosphorylated as a consequence of T-cell activation. Post-translationally, palmitoylated at the cytoplasmic tail and thereby targets the heterodimer CD8A/CD8B to lipid rafts unlike CD8A homodimers.

Its subcellular location is the cell membrane. Functionally, integral membrane glycoprotein that plays an essential role in the immune response and serves multiple functions in responses against both external and internal offenses. In T-cells, functions primarily as a coreceptor for MHC class I molecule:peptide complex. The antigens presented by class I peptides are derived from cytosolic proteins while class II derived from extracellular proteins. Interacts simultaneously with the T-cell receptor (TCR) and the MHC class I proteins presented by antigen presenting cells (APCs). In turn, recruits the Src kinase LCK to the vicinity of the TCR-CD3 complex. A palmitoylation site in the cytoplasmic tail of CD8B chain contributes to partitioning of CD8 into the plasma membrane lipid rafts where signaling proteins are enriched. Once LCK recruited, it initiates different intracellular signaling pathways by phosphorylating various substrates ultimately leading to lymphokine production, motility, adhesion and activation of cytotoxic T-lymphocytes (CTLs). Additionally, plays a critical role in thymic selection of CD8+ T-cells. The sequence is that of T-cell surface glycoprotein CD8 beta chain (CD8B) from Saimiri sciureus (Common squirrel monkey).